The chain runs to 711 residues: Nuclear intron maturase 1, mitochondrial (711 aa).

The 313-residue stretch at 147 to 459 folds into the Reverse transcriptase domain; it reads KDKISMNGGE…RGIQFLDHII (313 aa). The intron maturase type-2 stretch occupies residues 484 to 653; the sequence is GTLLSVSASL…QVLQEYIRLQ (170 aa).

Belongs to the plant nuclear intron maturase (nMat) family. Expressed at low levels in seedlings and accumulates in adult plants.

Its subcellular location is the mitochondrion. In terms of biological role, nuclear-encoded maturase required for splicing of group-II introns in mitochondria. Necessary for mitochondrial biogenesis during early developmental stages. Involved in the splicing of mitochondrial NAD4 transcripts. Required for trans-splicing of NAD1 intron 1 and also functions in cis-splicing of NAD2 intron 1 and NAD4 intron 2. Required for the regulation of fundamental metabolic pathways such as amino acid metabolism, triacylglycerol degradation and polysaccharide synthesis (cellulose and starch) during the early stage of plant growth. Implicated in stress responses. This chain is Nuclear intron maturase 1, mitochondrial, found in Arabidopsis thaliana (Mouse-ear cress).